Reading from the N-terminus, the 191-residue chain is Protein GrpE (191 aa).

Positions 1 to 15 are enriched in basic and acidic residues; that stretch reads MGKEEKNNIEDKALD. A disordered region spans residues 1–35; it reads MGKEEKNNIEDKALDNEQEMDQESTSKAVEELSIE.

It belongs to the GrpE family. In terms of assembly, homodimer.

The protein resides in the cytoplasm. Its function is as follows. Participates actively in the response to hyperosmotic and heat shock by preventing the aggregation of stress-denatured proteins, in association with DnaK and GrpE. It is the nucleotide exchange factor for DnaK and may function as a thermosensor. Unfolded proteins bind initially to DnaJ; upon interaction with the DnaJ-bound protein, DnaK hydrolyzes its bound ATP, resulting in the formation of a stable complex. GrpE releases ADP from DnaK; ATP binding to DnaK triggers the release of the substrate protein, thus completing the reaction cycle. Several rounds of ATP-dependent interactions between DnaJ, DnaK and GrpE are required for fully efficient folding. The polypeptide is Protein GrpE (Francisella philomiragia subsp. philomiragia (strain ATCC 25017 / CCUG 19701 / FSC 153 / O#319-036)).